The chain runs to 1375 residues: DNA-directed RNA polymerase subunit beta (1375 aa).

The protein belongs to the RNA polymerase beta chain family. In terms of assembly, the RNAP catalytic core consists of 2 alpha, 1 beta, 1 beta' and 1 omega subunit. When a sigma factor is associated with the core the holoenzyme is formed, which can initiate transcription.

It carries out the reaction RNA(n) + a ribonucleoside 5'-triphosphate = RNA(n+1) + diphosphate. Its function is as follows. DNA-dependent RNA polymerase catalyzes the transcription of DNA into RNA using the four ribonucleoside triphosphates as substrates. This chain is DNA-directed RNA polymerase subunit beta, found in Oleidesulfovibrio alaskensis (strain ATCC BAA-1058 / DSM 17464 / G20) (Desulfovibrio alaskensis).